The sequence spans 151 residues: Lipoprotein signal peptidase (151 aa).

A run of 3 helical transmembrane segments spans residues 3-23 (LYII…GWIV), 59-79 (WFFY…FYTS), and 85-107 (LYRI…RLHL). Catalysis depends on residues Asp-112 and Asp-128. Residues 123–143 (IFNVADTALTCGVICVFIAIL) traverse the membrane as a helical segment.

The protein belongs to the peptidase A8 family.

Its subcellular location is the cell membrane. The catalysed reaction is Release of signal peptides from bacterial membrane prolipoproteins. Hydrolyzes -Xaa-Yaa-Zaa-|-(S,diacylglyceryl)Cys-, in which Xaa is hydrophobic (preferably Leu), and Yaa (Ala or Ser) and Zaa (Gly or Ala) have small, neutral side chains.. It functions in the pathway protein modification; lipoprotein biosynthesis (signal peptide cleavage). Functionally, this protein specifically catalyzes the removal of signal peptides from prolipoproteins. This chain is Lipoprotein signal peptidase, found in Latilactobacillus sakei subsp. sakei (strain 23K) (Lactobacillus sakei subsp. sakei).